Reading from the N-terminus, the 355-residue chain is Methyltransferase FUS9 (355 aa).

The S-adenosyl-L-homocysteine site is built by Tyr-18, Asn-63, Asp-86, Ser-123, and Phe-124. Phe-231 provides a ligand contact to Mg(2+).

It belongs to the methyltransferase superfamily. Type-7 methyltransferase family. The cofactor is Mg(2+).

It functions in the pathway mycotoxin biosynthesis. Functionally, methyltransferase; part of the gene cluster that mediates the biosynthesis of the mycotoxin fusarin C. Within the cluster, FUS1, FUS2, FUS8 and FUS9 are sufficient for fusarin production. The roles of the other FUS members are yet undetermined. The fusarin C synthetase FUS1 is responsible for the condensation of one acetyl-coenzyme A (CoA) unit with six malonyl-CoA units and the amide linkage of the arising heptaketide and homoserine, subsequently releasing the first intermediate, prefusarin, as an alcohol with an open ring structure. The cytochrome P450 monooxygenase FUS8 participates in multiple oxidation processes at carbon C-20 and is able to use the FUS1 product as substrate, resulting in formation of 20-hydroxy-prefusarin. This reaction seems to be essential before the 2-pyrrolidone ring closure can be catalyzed by FUS2, generating 20-hydroxy-fusarin. FUS8 is able to further oxidizes carbon C-20 after ring closure, resulting in the formation of carboxy-fusarin C. As the last step, FUS9 methylates the hydroxyl group at C-21 to generate fusarin C. Fusarin C can then rearrange to epi-fusarin C, the (z)-isomers, and fusarin A and fusarin D. The chain is Methyltransferase FUS9 from Gibberella fujikuroi (strain CBS 195.34 / IMI 58289 / NRRL A-6831) (Bakanae and foot rot disease fungus).